A 187-amino-acid chain; its full sequence is ECF RNA polymerase sigma factor SigW (187 aa).

The tract at residues 3–95 is sigma-70 factor domain-2; that stretch reads MMIKKRIKQV…RKKKPDYYLD (93 aa). Residues 47–50 carry the Polymerase core binding motif; sequence DIAQ. The interval 125–187 is sigma-70 factor domain-4; the sequence is ELSNTIQQKI…EALRKQLRDL (63 aa). Positions 166 to 184 form a DNA-binding region, H-T-H motif; it reads VGTVKTRIHRGREALRKQL.

Belongs to the sigma-70 factor family. ECF subfamily. Interacts transiently with the RNA polymerase catalytic core formed by RpoA, RpoB, RpoC and RpoZ (2 alpha, 1 beta, 1 beta' and 1 omega subunit) to form the RNA polymerase holoenzyme that can initiate transcription. Forms a heterodimer with cognate anti-sigma factor RsiW, which prevents it from binding to the -10 and -35 promoter elements.

Extracytoplasmic function (ECF) sigma factors are held in an inactive form by a cognate anti-sigma factor (RsiW for this protein) until released by regulated membrane proteolysis (RIP). RIP occurs when an extracytoplasmic signal (envelope stress) triggers a concerted proteolytic cascade to transmit information and elicit cellular responses. The anti-sigma factor RsiW is a membrane protein, binding sigma-W in the cytoplasm. RsiW is first cut extracytoplasmically (site-1 protease, S1P, by PrsW), then within the membrane itself (site-2 protease, S2P, by RasP), while cytoplasmic proteases (predominantly ClpX-ClpP) finish degrading the regulatory protein, liberating sigma-W. Functionally, sigma factors are initiation factors that promote the attachment of RNA polymerase (RNAP) to specific initiation sites and are then released. Sigma-W controls genes involved in response to cell envelope stress such as antimicrobial peptides, alkaline pH, transport processes and detoxification. The protein is ECF RNA polymerase sigma factor SigW (sigW) of Bacillus subtilis (strain 168).